The primary structure comprises 138 residues: Large ribosomal subunit protein uL16 (138 aa).

This sequence belongs to the universal ribosomal protein uL16 family. Part of the 50S ribosomal subunit.

In terms of biological role, binds 23S rRNA and is also seen to make contacts with the A and possibly P site tRNAs. In Rubrobacter xylanophilus (strain DSM 9941 / JCM 11954 / NBRC 16129 / PRD-1), this protein is Large ribosomal subunit protein uL16.